Consider the following 626-residue polypeptide: Ankyrin repeat domain-containing protein 55 (626 aa).

ANK repeat units follow at residues 25–54 (VDLA…SILE), 59–88 (EGCT…NINT), 92–124 (YGRT…IPDK), 125–156 (NGRL…EINH), 160–189 (EGMT…DPTL), 193–222 (DFKT…GPSI), 229–259 (SGKT…NLQA), 263–292 (DDRT…DSNL), and 296–325 (NEST…AEPA). Over residues 354-372 (KEEQKAHQKDQSRARPKEE) the composition is skewed to basic and acidic residues. Disordered regions lie at residues 354 to 377 (KEEQ…TSEV), 455 to 491 (HAGL…SLEN), and 522 to 626 (QPGH…HDEN). S474 carries the post-translational modification Phosphoserine. A compositionally biased stretch (basic and acidic residues) spans 604-614 (QRGHDPPRAEE). Over residues 616–626 (GGSSSPTHDEN) the composition is skewed to polar residues.

This chain is Ankyrin repeat domain-containing protein 55 (Ankrd55), found in Mus musculus (Mouse).